Consider the following 460-residue polypeptide: uncharacterized protein (460 aa).

In terms of domain architecture, TRAM spans proline 8–lysine 66. Residues cysteine 79, cysteine 85, cysteine 88, and cysteine 166 each contribute to the [4Fe-4S] cluster site. S-adenosyl-L-methionine-binding residues include glutamine 290, tyrosine 319, glutamate 340, and aspartate 388. The Nucleophile role is filled by cysteine 415.

It belongs to the class I-like SAM-binding methyltransferase superfamily. RNA M5U methyltransferase family.

This is an uncharacterized protein from Bacillus cereus (strain ATCC 10987 / NRS 248).